The primary structure comprises 157 residues: Phosphopantetheine adenylyltransferase (157 aa).

Residue Thr8 coordinates substrate. Residues 8–9 (TF) and His16 contribute to the ATP site. 3 residues coordinate substrate: Lys40, Thr72, and Arg86. Residues 87-89 (GLR), Glu97, and 122-128 (YSFLSSS) contribute to the ATP site.

The protein belongs to the bacterial CoaD family. In terms of assembly, homohexamer. Mg(2+) is required as a cofactor.

The protein localises to the cytoplasm. It catalyses the reaction (R)-4'-phosphopantetheine + ATP + H(+) = 3'-dephospho-CoA + diphosphate. It participates in cofactor biosynthesis; coenzyme A biosynthesis; CoA from (R)-pantothenate: step 4/5. Functionally, reversibly transfers an adenylyl group from ATP to 4'-phosphopantetheine, yielding dephospho-CoA (dPCoA) and pyrophosphate. The polypeptide is Phosphopantetheine adenylyltransferase (Prochlorococcus marinus (strain MIT 9301)).